The primary structure comprises 281 residues: Bifunctional protein FolD (281 aa).

Residues 165-167 (GRG), threonine 192, and valine 233 contribute to the NADP(+) site.

It belongs to the tetrahydrofolate dehydrogenase/cyclohydrolase family. Homodimer.

It catalyses the reaction (6R)-5,10-methylene-5,6,7,8-tetrahydrofolate + NADP(+) = (6R)-5,10-methenyltetrahydrofolate + NADPH. It carries out the reaction (6R)-5,10-methenyltetrahydrofolate + H2O = (6R)-10-formyltetrahydrofolate + H(+). Its pathway is one-carbon metabolism; tetrahydrofolate interconversion. Functionally, catalyzes the oxidation of 5,10-methylenetetrahydrofolate to 5,10-methenyltetrahydrofolate and then the hydrolysis of 5,10-methenyltetrahydrofolate to 10-formyltetrahydrofolate. This chain is Bifunctional protein FolD, found in Corynebacterium diphtheriae (strain ATCC 700971 / NCTC 13129 / Biotype gravis).